Reading from the N-terminus, the 313-residue chain is Cytochrome c biogenesis protein CcsA (313 aa).

8 helical membrane passes run 9-29 (ILTH…LITF), 44-64 (GIIV…VSSG), 71-91 (LYES…IPYF), 111-131 (GFAT…VPAL), 143-163 (MILG…LLVI), 217-237 (VISL…VWAN), 244-264 (WNWD…AIYL), and 278-298 (AIVA…VNLL).

Belongs to the CcmF/CycK/Ccl1/NrfE/CcsA family. As to quaternary structure, may interact with Ccs1.

The protein localises to the plastid. The protein resides in the chloroplast thylakoid membrane. Its function is as follows. Required during biogenesis of c-type cytochromes (cytochrome c6 and cytochrome f) at the step of heme attachment. The protein is Cytochrome c biogenesis protein CcsA of Solanum lycopersicum (Tomato).